Here is a 435-residue protein sequence, read N- to C-terminus: Sex peptide receptor (435 aa).

Residues 1–93 are Extracellular-facing; the sequence is MDNYTDVLYQ…PLEYAMPLYG (93 aa). The helical transmembrane segment at 94 to 114 threads the bilayer; the sequence is YCMPFLLIITIISNSLIVLVL. The Cytoplasmic portion of the chain corresponds to 115-124; it reads SKKSMATPTN. Residues 125-145 form a helical membrane-spanning segment; that stretch reads FVLMGMAICDMLTVIFPAPGL. Residues 146 to 168 are Extracellular-facing; that stretch reads WYMYTFGNHYKPLHPVSMCLAYS. A helical membrane pass occupies residues 169–189; it reads IFNEIMPAMCHTISVWLTLAL. Residues 190 to 211 lie on the Cytoplasmic side of the membrane; the sequence is AVQRYIYVCHAPMARTWCTMPR. A helical transmembrane segment spans residues 212-229; that stretch reads VRRCTAYIALLAFLHQLP. Residues 230-276 lie on the Extracellular side of the membrane; sequence RFFDRTYMPLVIEWNGSPTEVCHLETSMWVHDYIGVDLYYTSYYLFR. The chain crosses the membrane as a helical span at residues 277–297; the sequence is VLFVHLLPCIILVTLNILLFA. Over 298-327 the chain is Cytoplasmic; the sequence is AMRQAQERRKLLFRENRKKECKKLRETNCT. Residues 328-348 traverse the membrane as a helical segment; that stretch reads TLMLIVVVSVFLLAEIPIAVV. Residues 349–368 are Extracellular-facing; it reads TAMHIVSSLIIEFLDYGLAN. Residues 369–389 form a helical membrane-spanning segment; sequence ICIMLTNFFLVFSYPINFGIY. The Cytoplasmic segment spans residues 390 to 435; that stretch reads CGMSRQFRETFKEIFLGRLMAKKDSSTKYSIVNGARTCTNTNETVL.

It belongs to the G-protein coupled receptor 1 family. In terms of tissue distribution, in the female, expressed in the reproductive organs; strongly expressed in the spermathecae and the lower oviduct. No expression in the male reproductive organs. In the central nervous system of both sexes, it is expressed in the brain and ventral nerve cord (VNC); strongly expressed in the ventral regions of the suboesophageal ganglion, the cervical connective and in many nerve roots of the brain and VNC. Expressed in the s-LNvs and l-LNvs pdf neurons (at protein level).

It is found in the cell membrane. Receptor for two functionally unrelated ligands; SP (A70A) for controlling reproductive behaviors and MIP for controlling sleep behavior. MIP-SPR pathway functions as a sleep homeostat which perceives the need for sleep and stabilizes it by providing a slow-acting inhibitory input to the fly arousal system that involve the pigment dispersing factor (pdf) neurons. SP-SPR is one of the multiple SP pathways that induce female post-mating behavioral responses (PMR) such as the suppression of mating receptivity and initiation of egg laying. The PMR switch is achieved by mediating the synaptic output of neurons such as those expressing fruitless (fru), double sex (dsx) and pickpocket (ppk). The sequence is that of Sex peptide receptor from Drosophila melanogaster (Fruit fly).